Reading from the N-terminus, the 164-residue chain is Probable calcium-binding protein CML17 (164 aa).

4 EF-hand domains span residues 4–39 (DQQA…LGMP), 40–75 (VHRE…VMRV), 88–123 (VDEA…LGIK), and 126–161 (RTAE…GAFA). Residues aspartate 17, aspartate 19, aspartate 21, arginine 23, glutamate 28, aspartate 53, asparagine 55, aspartate 57, cysteine 59, glutamate 64, aspartate 101, asparagine 103, aspartate 105, glutamate 112, aspartate 139, aspartate 141, aspartate 143, arginine 145, and glutamate 150 each contribute to the Ca(2+) site.

In terms of biological role, potential calcium sensor. This chain is Probable calcium-binding protein CML17 (CML17), found in Oryza sativa subsp. japonica (Rice).